Consider the following 176-residue polypeptide: Pectinesterase inhibitor 1 (176 aa).

The N-terminal stretch at 1–25 (MAANLRNNAFLSSLMFLLLIGSSYA) is a signal peptide. Intrachain disulfides connect cysteine 35–cysteine 44 and cysteine 98–cysteine 138. Residue asparagine 154 is glycosylated (N-linked (GlcNAc...) asparagine).

It belongs to the PMEI family. Monomer and homodimer. Interacts in vitro with PPME1. Highest expression in flowers. Expressed exclusively at the pollen tube tip.

The protein localises to the secreted. It localises to the extracellular space. Its subcellular location is the apoplast. Its function is as follows. Inhibits pectin methylesterase (PME) from flowers and siliques. Inhibits PME from leaves. This chain is Pectinesterase inhibitor 1, found in Arabidopsis thaliana (Mouse-ear cress).